The sequence spans 221 residues: uncharacterized protein (221 aa).

This is an uncharacterized protein from Methanocaldococcus jannaschii (strain ATCC 43067 / DSM 2661 / JAL-1 / JCM 10045 / NBRC 100440) (Methanococcus jannaschii).